A 962-amino-acid chain; its full sequence is Oncostatin-M-specific receptor subunit beta (962 aa).

An N-terminal signal peptide occupies residues 1 to 28 (MAFSVVLHQVTFLLAVLSLRTSQSKVLG). Residues 29-738 (EPLQLTPEIH…VTTPDVRSHM (710 aa)) are Extracellular-facing. The N-linked (GlcNAc...) asparagine glycan is linked to asparagine 219. 5 Fibronectin type-III domains span residues 237-332 (EPKN…VHPK), 333-426 (APHD…TPEA), 428-527 (PSEA…SGHE), 528-621 (EVHE…TQEL), and 623-734 (PSVN…TPDV). Cysteines 243 and 253 form a disulfide. Asparagine 324 is a glycosylation site (N-linked (GlcNAc...) asparagine). The WSXWS motif signature appears at 413–417 (WSDWM). 3 N-linked (GlcNAc...) asparagine glycosylation sites follow: asparagine 492, asparagine 578, and asparagine 723. Residues 739–759 (LLQIILPMTLGVFLSIIVCYW) traverse the membrane as a helical segment. Over 760 to 962 (KSQWVKEKCY…ASLKENNLTS (203 aa)) the chain is Cytoplasmic. Positions 768 to 776 (CYPDIPNPY) match the Box 1 motif motif. A disordered region spans residues 818-840 (VGSGKLHTEDVPTKPPLVPTEKD).

Belongs to the type I cytokine receptor family. Type 2 subfamily. As to quaternary structure, heterodimer composed of OSMR and IL6ST (type II OSM receptor). Heterodimer with IL31RA to form the IL31 receptor. Widely expressed. Expressed at high levels in the liver, skin and spleen. In the liver it is expressed exclusively in the oval cells.

It is found in the membrane. Associates with IL31RA to form the IL31 receptor. Binds IL31 and activates STAT1, STAT3 and STAT5. Capable of transducing OSM-specific signaling events. The OSM/OSM-R system is pivotal in the differentiation of oval cells into hepatocytes, thereby promoting liver regeneration. This is Oncostatin-M-specific receptor subunit beta (Osmr) from Rattus norvegicus (Rat).